We begin with the raw amino-acid sequence, 607 residues long: Elongation factor 4 (607 aa).

In terms of domain architecture, tr-type G spans 11 to 193; the sequence is EKIRNFSIIA…QIVEKVPAPT (183 aa). Residues 23-28 and 140-143 each bind GTP; these read DHGKST and NKID.

Belongs to the TRAFAC class translation factor GTPase superfamily. Classic translation factor GTPase family. LepA subfamily.

Its subcellular location is the cell membrane. It catalyses the reaction GTP + H2O = GDP + phosphate + H(+). In terms of biological role, required for accurate and efficient protein synthesis under certain stress conditions. May act as a fidelity factor of the translation reaction, by catalyzing a one-codon backward translocation of tRNAs on improperly translocated ribosomes. Back-translocation proceeds from a post-translocation (POST) complex to a pre-translocation (PRE) complex, thus giving elongation factor G a second chance to translocate the tRNAs correctly. Binds to ribosomes in a GTP-dependent manner. This is Elongation factor 4 from Streptococcus pneumoniae (strain Hungary19A-6).